Reading from the N-terminus, the 487-residue chain is MTITPQQLIAMLPLLIVGLTVVVVMLSIAWRRDHFINATLTVIGLNLALLSLYFVGQVGPMDVTPLMRVDGYSMFYTGLVIIASLATSTFAYPWLVGYPDNREEFYLLVLIAALGGILLASANHLASLFLGIELLTLPLFGLIGYAYRQKRSLEASIKYMLLSAAASSFLLFGMALLYAESGSLSFVGLGQSLSDSMVHQPLILAGLGMMIVGLGFKLSLVPFQLWTPDVYQGAPAPVSTFLATASKIAIFAVVMRLFMYAPAADSEAVRLVLSIIAVASILFGNLMAISQTNIKRLLGYSSIAHLGYLLIALVAVQTHELALPLETIGVYLAGYLFSSLGAFGVVSLMSSPYKGPDAESLFSYRGLFWHKPILSAVMTVMMLSLAGIPMTLGFIGKFFVVAMGVSANLWWLTGAVVLGSAIGLYYYLRVTVSLFLSPPQSLVRDTPSNWALTAGGVVVLISAILVLVLGIYPQPLITLVQMAQPLM.

The next 14 membrane-spanning stretches (helical) occupy residues 8 to 28, 35 to 55, 78 to 98, 104 to 124, 125 to 145, 159 to 179, 203 to 223, 235 to 255, 271 to 291, 297 to 317, 328 to 348, 376 to 396, 409 to 428, and 451 to 471; these read LIAM…MLSI, FINA…LYFV, GLVI…LVGY, EFYL…SANH, LASL…LIGY, YMLL…LLYA, ILAG…LVPF, PAPV…AVVM, LVLS…AISQ, LLGY…VAVQ, IGVY…VVSL, AVMT…GFIG, LWWL…YYYL, and ALTA…VLGI.

The protein belongs to the complex I subunit 2 family. In terms of assembly, NDH-1 is composed of 13 different subunits. Subunits NuoA, H, J, K, L, M, N constitute the membrane sector of the complex.

It is found in the cell inner membrane. The enzyme catalyses a quinone + NADH + 5 H(+)(in) = a quinol + NAD(+) + 4 H(+)(out). In terms of biological role, NDH-1 shuttles electrons from NADH, via FMN and iron-sulfur (Fe-S) centers, to quinones in the respiratory chain. The immediate electron acceptor for the enzyme in this species is believed to be ubiquinone. Couples the redox reaction to proton translocation (for every two electrons transferred, four hydrogen ions are translocated across the cytoplasmic membrane), and thus conserves the redox energy in a proton gradient. The polypeptide is NADH-quinone oxidoreductase subunit N (Yersinia pseudotuberculosis serotype O:1b (strain IP 31758)).